A 342-amino-acid polypeptide reads, in one-letter code: Spermidine synthase (342 aa).

The segment at 9–42 is disordered; sequence MKGTELPVKRPREEEAETEMEAANNSNNGCEKEE. The PABS domain maps to 52–289; sequence PGWFSEISPL…GMIGFMLCST (238 aa). Q83 serves as a coordination point for S-adenosyl 3-(methylsulfanyl)propylamine. Residue Y113 participates in putrescine binding. Residues Q114, D138, E158, 189 to 190, and D208 contribute to the S-adenosyl 3-(methylsulfanyl)propylamine site; that span reads DG. Catalysis depends on D208, which acts as the Proton acceptor. Residues 208 to 211 and Y277 each bind putrescine; that span reads DSSD.

The protein belongs to the spermidine/spermine synthase family.

The catalysed reaction is S-adenosyl 3-(methylsulfanyl)propylamine + putrescine = S-methyl-5'-thioadenosine + spermidine + H(+). It participates in amine and polyamine biosynthesis; spermidine biosynthesis; spermidine from putrescine: step 1/1. In Solanum lycopersicum (Tomato), this protein is Spermidine synthase (SPDSYN).